Here is a 632-residue protein sequence, read N- to C-terminus: Extracellular metalloproteinase 2 (632 aa).

The N-terminal stretch at methionine 1–glycine 19 is a signal peptide. Positions histidine 20 to serine 244 are excised as a propeptide. The N-linked (GlcNAc...) asparagine glycan is linked to asparagine 270. The segment covering asparagine 294–asparagine 310 has biased composition (polar residues). A disordered region spans residues asparagine 294–arginine 313. A Zn(2+)-binding site is contributed by histidine 429. The active site involves glutamate 430. Zn(2+) is bound at residue histidine 433.

The protein belongs to the peptidase M36 family. The cofactor is Zn(2+).

The protein localises to the secreted. Secreted metalloproteinase probably acting as a virulence factor. The sequence is that of Extracellular metalloproteinase 2 (MEP2) from Arthroderma otae (Microsporum canis).